The primary structure comprises 87 residues: MNLFNFFTRSRSTAPVARERLQLLLAHERALSGQSDLAVVLQEEILAVIAKHVSIDREKVNVKLGRDGTVSTLEIDIEMPEAALVKN.

Belongs to the MinE family.

Functionally, prevents the cell division inhibition by proteins MinC and MinD at internal division sites while permitting inhibition at polar sites. This ensures cell division at the proper site by restricting the formation of a division septum at the midpoint of the long axis of the cell. This Acidiphilium cryptum (strain JF-5) protein is Cell division topological specificity factor.